The primary structure comprises 266 residues: uncharacterized protein (266 aa).

The first 22 residues, 1–22, serve as a signal peptide directing secretion; the sequence is MRYLKKLAWFISVIILGIFIIG. The N-palmitoyl cysteine moiety is linked to residue Cys-23. A lipid anchor (S-diacylglycerol cysteine) is attached at Cys-23.

The protein belongs to the staphylococcal tandem lipoprotein family.

Its subcellular location is the cell membrane. This is an uncharacterized protein from Staphylococcus aureus (strain USA300).